We begin with the raw amino-acid sequence, 725 residues long: MLKTKRKLTKAIGVALSISILSSLVSFIPQTNTYAAGTYNYGEALQKSIMFYEFQRSGDLPADKRDNWRDDSGMKDGSDVGVDLTGGWYDAGDHVKFNLPMSYTSAMLAWSLYEDKDAYDKSGQTKYIMDGIKWANDYFIKCNPTPGVYYYQVGDGGKDHSWWGPAEVMQMERPSFKVDASKPGSAVCASTAASLASAAVVFKSSDPTYAEKCISHAKNLFDMADKAKSDAGYTAASGYYSSSSFYDDLSWAAVWLYLATNDSTYLDKAESYVPNWGKEQQTDIIAYKWGQCWDDVHYGAELLLAKLTNKQLYKDSIEMNLDFWTTGVNGTRVSYTPKGLAWLFQWGSLRHATTQAFLAGVYAEWEGCTPSKVSVYKDFLKSQIDYALGSTGRSFVVGYGVNPPQHPHHRTAHGSWTDQMTSPTYHRHTIYGALVGGPDNADGYTDEINNYVNNEIACDYNAGFTGALAKMYKHSGGDPIPNFKAIEKITNDEVIIKAGLNSTGPNYTEIKAVVYNQTGWPARVTDKISFKYFMDLSEIVAAGIDPLSLVTSSNYSEGKNTKVSGVLPWDVSNNVYYVNVDLTGENIYPGGQSACRREVQFRIAAPQGTTYWNPKNDFSYDGLPTTSTVNTVTNIPVYDNGVKVFGNEPAGGSENPDPEILYGDVNSDKNVDALDFAALKKYLLGGTSSIDVKAADTYKDGNIDAIDMATLKKYLLGTITQLPQG.

Positions 1–35 (MLKTKRKLTKAIGVALSISILSSLVSFIPQTNTYA) are cleaved as a signal peptide. Catalysis depends on aspartate 93, which acts as the Nucleophile. Active-site residues include histidine 408, aspartate 446, and glutamate 455. The CBM3 domain occupies 489–650 (ITNDEVIIKA…GVKVFGNEPA (162 aa)). One can recognise a Dockerin domain in the interval 658-724 (PEILYGDVNS…LLGTITQLPQ (67 aa)).

This sequence belongs to the glycosyl hydrolase 9 (cellulase E) family.

It catalyses the reaction Endohydrolysis of (1-&gt;4)-beta-D-glucosidic linkages in cellulose, lichenin and cereal beta-D-glucans.. Its pathway is glycan metabolism; cellulose degradation. In terms of biological role, the biological conversion of cellulose to glucose generally requires three types of hydrolytic enzymes: (1) Endoglucanases which cut internal beta-1,4-glucosidic bonds; (2) Exocellobiohydrolases that cut the disaccharide cellobiose from the non-reducing end of the cellulose polymer chain; (3) Beta-1,4-glucosidases which hydrolyze the cellobiose and other short cello-oligosaccharides to glucose. This is Endoglucanase G (celCCG) from Ruminiclostridium cellulolyticum (strain ATCC 35319 / DSM 5812 / JCM 6584 / H10) (Clostridium cellulolyticum).